A 566-amino-acid polypeptide reads, in one-letter code: Urease subunit alpha (566 aa).

One can recognise a Urease domain in the interval 128 to 566 (GGIDTHIHWI…LPMAQRYFLF (439 aa)). Histidine 133, histidine 135, and lysine 216 together coordinate Ni(2+). Residue lysine 216 is modified to N6-carboxylysine. Position 218 (histidine 218) interacts with substrate. Ni(2+)-binding residues include histidine 245 and histidine 271. The active-site Proton donor is the histidine 319. Aspartate 359 provides a ligand contact to Ni(2+).

The protein belongs to the metallo-dependent hydrolases superfamily. Urease alpha subunit family. As to quaternary structure, heterotrimer of UreA (gamma), UreB (beta) and UreC (alpha) subunits. Three heterotrimers associate to form the active enzyme. Ni cation serves as cofactor. In terms of processing, carboxylation allows a single lysine to coordinate two nickel ions.

The protein localises to the cytoplasm. The catalysed reaction is urea + 2 H2O + H(+) = hydrogencarbonate + 2 NH4(+). It participates in nitrogen metabolism; urea degradation; CO(2) and NH(3) from urea (urease route): step 1/1. The polypeptide is Urease subunit alpha (Acinetobacter baylyi (strain ATCC 33305 / BD413 / ADP1)).